The sequence spans 448 residues: MPMFQPLKRDGLIGFEGGGDGQVLDLDTAVKDGVLGGVNGGGVGVVDEKLDLKKMIKELDLQDIPSVFICPISLEPMQDPVTLCTGQTYERLNIHKWFNLGHLTCPTTMQELWDDTVTPNKTLHHLIYTWFSQKYVLMKKRSEDVQGRAIEILGTLKKAKGQARVHALSELKQIVIAHLMARKTVVEEGGVSVISSLLGPFTSHAVGSEVVAILVSLDLDSDSKSGLMQPAKVSLIVDMLNDGSNETKINCARLIRGLVEEKGFRAELVSSHSLLVGLMRLVKDKRHRNGVSPALRLLKPISVHKQVRSLMVSIGAVPQLVDILPSLDPECLELALFVLDALCTDVEGRVAVKDSANTIPYTVRVLMRVSENCTNYALSILWSVCKLAPEECSPLAVEVGLAAKLLLVIQSGCDAALKQRSAELLKLCSLHYSDTMFISKCKLTRTIQ.

A U-box domain is found at 63 to 137 (DIPSVFICPI…YTWFSQKYVL (75 aa)). ARM repeat units lie at residues 179–219 (LMAR…SLDL) and 221–260 (SDSK…GLVE).

The enzyme catalyses S-ubiquitinyl-[E2 ubiquitin-conjugating enzyme]-L-cysteine + [acceptor protein]-L-lysine = [E2 ubiquitin-conjugating enzyme]-L-cysteine + N(6)-ubiquitinyl-[acceptor protein]-L-lysine.. It functions in the pathway protein modification; protein ubiquitination. Functions as an E3 ubiquitin ligase. This is U-box domain-containing protein 30 (PUB30) from Arabidopsis thaliana (Mouse-ear cress).